The following is a 776-amino-acid chain: LPS-assembly protein LptD (776 aa).

The first 24 residues, 1–24 (MQHFSRTFLAASIATALFAPYAQA), serve as a signal peptide directing secretion.

It belongs to the LptD family. As to quaternary structure, component of the lipopolysaccharide transport and assembly complex. Interacts with LptE and LptA.

The protein localises to the cell outer membrane. Functionally, together with LptE, is involved in the assembly of lipopolysaccharide (LPS) at the surface of the outer membrane. The protein is LPS-assembly protein LptD of Vibrio vulnificus (strain YJ016).